The sequence spans 1370 residues: MASARAASRGVYRYLCPNCGGPNSEERLSRGLPCPRCLPRLPRKGVSGWTGLARLLRREGTLGAGVKAMASLEEEARSLWRFFEKAVGSPPWGAQRTWAKRLARGDSFSIIAPTGVGKTTFGAAASLFYACKKGMRSYIVLPTTTLAANVARKLESMVESTGCGRVRLLVIHSKLKTSERREAMERFEKGDFDILVTTAAFARKYADRLSGYRFRLVFVDDVDAVLRSARSVDAILKIVGFDEEAIEKGLEVLRLQREQARLVGLLQSQREEVREEARKKLLEVKRRLERLEAEIEARRGRTASLIVSSATGRPRGARVRLFRVLLNFEAGGRGDIGLRRVIDSYTHPTDGVAEKVVELVRRLGTGGLVYVPIDMGVEYAERLAEELRRAGVKAEAYHAKKPLELLDRFAEGEIDVLVGVANYYGTLVRGLDLPARVRYAVFAGVPRHKFGSDIGDPHPSRLLRLLSILAESRIEEVASAARSHMGRLRRMLRVLSPAALQMIAERVARGEVEGGYDRQVLEAYQFLREALARDDVWESLRELDVGIVREGGRTYILVPDPATYLQASGRTSRLYAGGITLGLSVVVVDNEPVMRGLMKRVSWMAEVDWRRFEDLDLQSILREIDEDREKVRRVVKGLYRGVELVRTALLVVESPNKARTIARFFGQPSVRLLPGGGRVYEVATGDKILMIMASGGHVFDLVVRVDGRDLEAAGGEPEHAIFGVLRYRLGGNGAAAYTPVYTSIKRCLDCGYQFVDEASRCPRCGSELIRNSLSTVEDLRRVAWEADEVYVGTDPDTEGEKIGWDVALALRPYAPDIKRLEFHEVTKKAILEALSNPRSFDDNLVDAQVVRRVEDRWIGFTLSPLLWCDFWPRYCKRVLEEYGEKRPHMDRERCAKYKAYYNLSAGRVQTPTLGWVVDRTLAYRKKVWLYRVVHDSQLLFAVRSDDPEVPESVKRVLDNWVKHHKKTGIEPWLDVKAVVEKEEWTALPPPPPYTTDTMLRDANRLLGLGSAEAMRIAQDLFEWGLITYHRTDSTRVSDRGMQVAREWLETRFGGLAGQLYRPRRWGEGGAHEAIRPVRPIDVERLQLLVEEGVIELPGTLTRRHLRLYDLIFRRFMASQMREADALRVVYRLRVPELDGYTLTLERVVEIGRPGDAEGVTRGFTLVWPYVRPQPRLVEGREAWIRARVEGRQVPKAYPYTEGEIVEEMKTRGIGRPSTYAKIVETLFRRRYVIEVSREEGRGAGFVVATSRGINVYNYLTEELRSADEEEYGGRIAGILRRVPSLVSEDRTRELERQMDMVEKGDASRDDVLESVFNEISDLALLLNIEHPIKHRSRAEGNTQGNTWVSNFVACAVKSPEVSRVWGAGVG.

An RG N-terminal-type zinc finger spans residues 6–47 (AASRGVYRYLCPNCGGPNSEERLSRGLPCPRCLPRLPRKGVS). The Zn(2+) site is built by C16, C19, C34, and C37. ATP contacts are provided by residues Q95 and 112–119 (APTGVGKT). Residues 99-287 (AKRLARGDSF…RKKLLEVKRR (189 aa)) enclose the Helicase ATP-binding domain. Positions 220 to 223 (DDVD) match the DEAD box motif. The tract at residues 643–1370 (ELVRTALLVV…VSRVWGAGVG (728 aa)) is topoisomerase I. Positions 647–825 (TALLVVESPN…DIKRLEFHEV (179 aa)) constitute a Toprim domain. Position 653 (E653) interacts with Mg(2+). The RG C-terminal-type zinc finger occupies 744 to 772 (IKRCLDCGYQFVDEASRCPRCGSELIRNS). Residues C747, C750, C761, and C764 each coordinate Zn(2+). A Mg(2+)-binding site is contributed by D794. The 483-residue stretch at 841–1323 (DDNLVDAQVV…SVFNEISDLA (483 aa)) folds into the Topo IA-type catalytic domain. The O-(5'-phospho-DNA)-tyrosine intermediate role is filled by Y1028.

This sequence in the N-terminal section; belongs to the DEAD box helicase family. DDVD subfamily. It in the C-terminal section; belongs to the type IA topoisomerase family. Monomer. It depends on Zn(2+) as a cofactor. Mg(2+) serves as cofactor.

The protein localises to the cytoplasm. It carries out the reaction ATP + H2O = ADP + phosphate + H(+). In terms of biological role, modifies the topological state of DNA by introducing positive supercoils in an ATP-dependent process, increasing the linking number in steps of +1. Binds to single-stranded DNA, transiently cleaves and then rejoins the ends, introducing a positive supercoil in the process. The scissile phosphodiester is attacked by the catalytic tyrosine of the enzyme, resulting in the formation of a DNA-(5'-phosphotyrosyl)-enzyme intermediate. Probably involved in rewinding DNA strands in regions of the chromosome that have opened up to allow replication, transcription, DNA repair and/or for DNA protection. The chain is Reverse gyrase 1 from Aeropyrum pernix (strain ATCC 700893 / DSM 11879 / JCM 9820 / NBRC 100138 / K1).